A 259-amino-acid polypeptide reads, in one-letter code: Ribosomal RNA large subunit methyltransferase E (259 aa).

Residues Gly49, Trp51, Asp69, Asp88, and Asp112 each coordinate S-adenosyl-L-methionine. The active-site Proton acceptor is the Lys152. The region spanning Pro199–Asp257 is the TRAM domain.

It belongs to the class I-like SAM-binding methyltransferase superfamily. RNA methyltransferase RlmE family.

It is found in the cytoplasm. It carries out the reaction uridine(2552) in 23S rRNA + S-adenosyl-L-methionine = 2'-O-methyluridine(2552) in 23S rRNA + S-adenosyl-L-homocysteine + H(+). Functionally, specifically methylates the uridine in position 2552 of 23S rRNA at the 2'-O position of the ribose in the fully assembled 50S ribosomal subunit. The sequence is that of Ribosomal RNA large subunit methyltransferase E from Halobacterium salinarum (strain ATCC 29341 / DSM 671 / R1).